We begin with the raw amino-acid sequence, 91 residues long: uncharacterized protein (91 aa).

The first 25 residues, 1–25 (MLLQRIGIEHLRIWILLLLISLVPA), serve as a signal peptide directing secretion.

This is an uncharacterized protein from Caenorhabditis elegans.